We begin with the raw amino-acid sequence, 954 residues long: Isoleucine--tRNA ligase (954 aa).

The 'HIGH' region signature appears at 60-70; that stretch reads PYANGALHMGH. Position 564 (glutamate 564) interacts with L-isoleucyl-5'-AMP. The 'KMSKS' region motif lies at 605 to 609; the sequence is KMSKS. Position 608 (lysine 608) interacts with ATP. Zn(2+) is bound by residues cysteine 923, cysteine 926, cysteine 943, and cysteine 946.

It belongs to the class-I aminoacyl-tRNA synthetase family. IleS type 1 subfamily. In terms of assembly, monomer. Zn(2+) serves as cofactor.

Its subcellular location is the cytoplasm. It carries out the reaction tRNA(Ile) + L-isoleucine + ATP = L-isoleucyl-tRNA(Ile) + AMP + diphosphate. Its function is as follows. Catalyzes the attachment of isoleucine to tRNA(Ile). As IleRS can inadvertently accommodate and process structurally similar amino acids such as valine, to avoid such errors it has two additional distinct tRNA(Ile)-dependent editing activities. One activity is designated as 'pretransfer' editing and involves the hydrolysis of activated Val-AMP. The other activity is designated 'posttransfer' editing and involves deacylation of mischarged Val-tRNA(Ile). The polypeptide is Isoleucine--tRNA ligase (Synechococcus sp. (strain ATCC 27144 / PCC 6301 / SAUG 1402/1) (Anacystis nidulans)).